We begin with the raw amino-acid sequence, 387 residues long: Fetuin-B (387 aa).

An N-terminal signal peptide occupies residues 1–18 (MNVLLLLVLCTLAMGCGA). Cystatin fetuin-B-type domains follow at residues 25 to 139 (AARP…YNCT) and 150 to 258 (MTCP…VTCS). Asn37 carries N-linked (GlcNAc...) asparagine glycosylation. 5 cysteine pairs are disulfide-bonded: Cys94-Cys105, Cys118-Cys138, Cys152-Cys155, Cys217-Cys225, and Cys238-Cys257. An N-linked (GlcNAc...) asparagine glycan is attached at Asn137. Residues 264–306 (APTPRGENATVNQRPANPSKTEELQQQNTAPTNSPTKAVPKGS) are disordered. Residue Asn271 is glycosylated (N-linked (GlcNAc...) asparagine). Residues 272 to 299 (ATVNQRPANPSKTEELQQQNTAPTNSPT) are compositionally biased toward polar residues. 2 O-linked (GalNAc...) threonine glycosylation sites follow: Thr292 and Thr295. A Phosphoserine modification is found at Ser320. Residues 366–387 (KEQRSAECPGPAQKGYPFILPS) form a disordered region.

It belongs to the fetuin family. Liver and testis.

It localises to the secreted. In terms of biological role, protease inhibitor required for egg fertilization. Required to prevent premature zona pellucida hardening before fertilization, probably by inhibiting the protease activity of ASTL, a protease that mediates the cleavage of ZP2 and triggers zona pellucida hardening. The sequence is that of Fetuin-B (FETUB) from Bos taurus (Bovine).